Consider the following 487-residue polypeptide: 3-octaprenyl-4-hydroxybenzoate carboxy-lyase (487 aa).

Asn172 contacts Mn(2+). Residues 175–177 (IYR), 189–191 (RWL), and 194–195 (RG) each bind prenylated FMN. Glu238 serves as a coordination point for Mn(2+). Asp287 (proton donor) is an active-site residue.

The protein belongs to the UbiD family. As to quaternary structure, homohexamer. Prenylated FMN serves as cofactor. Requires Mn(2+) as cofactor.

The protein localises to the cell membrane. The enzyme catalyses a 4-hydroxy-3-(all-trans-polyprenyl)benzoate + H(+) = a 2-(all-trans-polyprenyl)phenol + CO2. Its pathway is cofactor biosynthesis; ubiquinone biosynthesis. Catalyzes the decarboxylation of 3-octaprenyl-4-hydroxy benzoate to 2-octaprenylphenol, an intermediate step in ubiquinone biosynthesis. This Thiobacillus denitrificans (strain ATCC 25259 / T1) protein is 3-octaprenyl-4-hydroxybenzoate carboxy-lyase.